A 329-amino-acid polypeptide reads, in one-letter code: MDTTEKLKLINRNLKEVIGGDIMEKIINKRDLNVYWGTATTGKPHIAYFLPILKIKDFVDAGCNVTILLADIHAFLDNLKAPIEKIECRSQYYKKIITLMLKSIKVDVSKISFIFGSEYQKSNKYFTDILRILNQTKKNDARRAGSEVVKQVKNSKLSSLVYPAMQALDEEYLNVDVQFGGIDQRKIFMYAREFLPLLKYKKRIHLMNPMIPGLNSDKMSSSDIDSKIDLLDTKLEIYKKIHNCSLENEGLIFLFKSIIYPYCSIFNLQIMISGKVYTFDKLYEDIKMKIIDETELKNIASDMIERLICPIRDEMLRDLKLIENAYGNK.

Tyr35 lines the L-tyrosine pocket. A 'HIGH' region motif is present at residues 40–48 (TTGKPHIAY). The L-tyrosine site is built by Tyr162, Gln166, Asp169, and Gln184. Residues 218–222 (KMSSS) carry the 'KMSKS' region motif.

The protein belongs to the class-I aminoacyl-tRNA synthetase family. In terms of assembly, homodimer.

The protein resides in the cytoplasm. The catalysed reaction is tRNA(Tyr) + L-tyrosine + ATP = L-tyrosyl-tRNA(Tyr) + AMP + diphosphate + H(+). This chain is Probable tyrosine--tRNA ligase, cytoplasmic, found in Vairimorpha ceranae (strain BRL01) (Microsporidian parasite).